We begin with the raw amino-acid sequence, 84 residues long: Large ribosomal subunit protein bL27 (84 aa).

The tract at residues 1–24 (MAHKKGAASTKNGRDSNSQRLGVK) is disordered. Over residues 9–20 (STKNGRDSNSQR) the composition is skewed to polar residues.

The protein belongs to the bacterial ribosomal protein bL27 family.

This Nocardioides sp. (strain ATCC BAA-499 / JS614) protein is Large ribosomal subunit protein bL27.